Consider the following 161-residue polypeptide: IVVPRTMEDLDLQKVAGTWHSMAMAASDISLLDSETAPLRVYIQELRPTPQDNLEIVLRKWEDGRCAEQKVLAEKTEVPAEFKINYVEENQIFLLDTDYDNYLFFCEMNADAPQQSLMCQCLARTLEVDNEVMEKFNRALKTLPVHMQLLNPTQAEEQCLI.

Intrachain disulfides connect C66–C159 and C106–C119.

Belongs to the calycin superfamily. Lipocalin family. In terms of assembly, monomer. As to expression, synthesized in mammary gland and secreted in milk.

Its subcellular location is the secreted. Functionally, primary component of whey, it binds retinol and is probably involved in the transport of that molecule. The chain is Beta-lactoglobulin-1 (LGB1) from Canis lupus familiaris (Dog).